The following is a 346-amino-acid chain: Immunoglobulin heavy constant alpha (346 aa).

Ig-like domains are found at residues 6–96 (PSIF…KSVD), 118–212 (PRLS…VSIT), and 221–323 (PQVH…KSID). Cys26 and Cys83 are oxidised to a cystine. Asn134 carries N-linked (GlcNAc...) (complex) asparagine glycosylation. Disulfide bonds link Cys139–Cys196 and Cys243–Cys306. N-linked (GlcNAc...) (complex) asparagine glycosylation occurs at Asn333.

In terms of assembly, immunoglobulins are composed of two identical heavy chains and two identical light chains; disulfide-linked. Monomeric or polymeric. Part of the secretory IgA (sIgA) complex that consists of two, four or five IgA monomers, and two additional non-Ig polypeptides, namely the JCHAIN and the secretory component (the proteolytic product of PIGR). In terms of processing, N-glycosylated. N-glycans attached to Asn-134 varies from differentially fucosylated complex and hybrid to sialylated with N-glycoyl neuraminic acid types: GlcNAc2Man3GlcNAc2(Fuc); GlcNAc1Man4GlcNAc2(Fuc); GlcNAc1Man4GlcNAc2; Gal1GlcNAc2Man3GlcNAc2(Fuc); GlcNAc2Man3GlcNAc2; Gal1GlcNAc2Man3GlcNAc2; GlcNAc1Man3GlcNAc2; GlcNAc1Man2GlcNAc2 and NeuGc1Gal1GlcNAc2Man3GlcNAc2(Fuc). N-glycans attached to Asn-333 are mainly fucosylated complex types: GlcNAc2Man3GlcNAc2; GlcNAc1Man3GlcNAc2; GlcNAc1Man3GlcNAc2(Fuc); GlcNAc2Man3GlcNAc2(Fuc); Gal1GlcNAc2Man3GlcNAc2(Fuc); NeuGc1Gal1GlcNAc1Man3GlcNAc2(Fuc); NeuGc1Gal1GlcNAc2Man3GlcNAc2(Fuc) and NeuAc1Gal1GlcNAc2Man3GlcNAc2(Fuc).

The protein localises to the secreted. It is found in the cell membrane. Functionally, constant region of immunoglobulin heavy chains. Immunoglobulins, also known as antibodies, are membrane-bound or secreted glycoproteins produced by B lymphocytes. In the recognition phase of humoral immunity, the membrane-bound immunoglobulins serve as receptors which, upon binding of a specific antigen, trigger the clonal expansion and differentiation of B lymphocytes into immunoglobulins-secreting plasma cells. Secreted immunoglobulins mediate the effector phase of humoral immunity, which results in the elimination of bound antigens. The antigen binding site is formed by the variable domain of one heavy chain, together with that of its associated light chain. Thus, each immunoglobulin has two antigen binding sites with remarkable affinity for a particular antigen. The variable domains are assembled by a process called V-(D)-J rearrangement and can then be subjected to somatic hypermutations which, after exposure to antigen and selection, allow affinity maturation for a particular antigen. Ig alpha is the major immunoglobulin class in body secretions. In Equus asinus (Donkey), this protein is Immunoglobulin heavy constant alpha (IGHA).